Here is a 263-residue protein sequence, read N- to C-terminus: 4-hydroxy-2-oxo-heptane-1,7-dioate aldolase (263 aa).

Residue H45 is the Proton acceptor of the active site. Position 147 (Q147) interacts with substrate. E149 serves as a coordination point for a divalent metal cation. 2 residues coordinate substrate: A174 and D175. D175 provides a ligand contact to a divalent metal cation.

Belongs to the HpcH/HpaI aldolase family. Homohexamer; trimer of dimers. A divalent metal cation is required as a cofactor.

It catalyses the reaction 4-hydroxy-2-oxoheptanedioate = succinate semialdehyde + pyruvate. Its pathway is aromatic compound metabolism; 4-hydroxyphenylacetate degradation; pyruvate and succinate semialdehyde from 4-hydroxyphenylacetate: step 7/7. Catalyzes the reversible retro-aldol cleavage of 4-hydroxy-2-ketoheptane-1,7-dioate (HKHD) to pyruvate and succinic semialdehyde. The polypeptide is 4-hydroxy-2-oxo-heptane-1,7-dioate aldolase (Salmonella heidelberg (strain SL476)).